The primary structure comprises 419 residues: Tyrosine--tRNA ligase (419 aa).

L-tyrosine is bound at residue Tyr34. A 'HIGH' region motif is present at residues 39-48 (PTADSLHLGN). Residues Tyr169 and Gln173 each coordinate L-tyrosine. The short motif at 229–233 (KFGKS) is the 'KMSKS' region element. Lys232 serves as a coordination point for ATP. Residues 353–419 (LTLIELLISA…GKKKNFVLTY (67 aa)) form the S4 RNA-binding domain.

Belongs to the class-I aminoacyl-tRNA synthetase family. TyrS type 1 subfamily. Homodimer.

It is found in the cytoplasm. The enzyme catalyses tRNA(Tyr) + L-tyrosine + ATP = L-tyrosyl-tRNA(Tyr) + AMP + diphosphate + H(+). Catalyzes the attachment of tyrosine to tRNA(Tyr) in a two-step reaction: tyrosine is first activated by ATP to form Tyr-AMP and then transferred to the acceptor end of tRNA(Tyr). This chain is Tyrosine--tRNA ligase, found in Lactococcus lactis subsp. cremoris (strain SK11).